Consider the following 318-residue polypeptide: Dimethyladenosine transferase (318 aa).

S-adenosyl-L-methionine-binding residues include His37, Leu39, Gly64, Glu85, Asp113, and Asn128.

This sequence belongs to the class I-like SAM-binding methyltransferase superfamily. rRNA adenine N(6)-methyltransferase family.

The protein resides in the cytoplasm. The protein localises to the nucleus. It localises to the nucleolus. It carries out the reaction adenosine(1779)/adenosine(1780) in 18S rRNA + 4 S-adenosyl-L-methionine = N(6)-dimethyladenosine(1779)/N(6)-dimethyladenosine(1780) in 18S rRNA + 4 S-adenosyl-L-homocysteine + 4 H(+). Functionally, specifically dimethylates two adjacent adenosines in the loop of a conserved hairpin near the 3'-end of 18S rRNA in the 40S particle. This chain is Dimethyladenosine transferase, found in Saccharomyces cerevisiae (strain ATCC 204508 / S288c) (Baker's yeast).